Reading from the N-terminus, the 90-residue chain is U7-theraphotoxin-Hhn1h (90 aa).

The N-terminal stretch at 1-19 is a signal peptide; it reads MKTAIFTVVLALAVFAVLS. Residues 20-50 constitute a propeptide that is removed on maturation; sequence FGWEANEKALSEEFTELIHEKEAASETEARE. Disulfide bonds link C51–C65, C58–C70, and C64–C81.

Belongs to the neurotoxin 10 (Hwtx-1) family. 13 (Hntx-13) subfamily. Expressed by the venom gland.

Its subcellular location is the secreted. Its function is as follows. Ion channel inhibitor. The sequence is that of U7-theraphotoxin-Hhn1h from Cyriopagopus hainanus (Chinese bird spider).